We begin with the raw amino-acid sequence, 398 residues long: MVEPQEGKTRFHDFKLSNELMHAIHDLGFPYCTPIQAQVLGYTLRGQDAIGRAQTGTGKTAAFLISIISQLQQTPPPKERYMGEPRALIIAPTRELVVQIAKDAAALTKYTGLNVMSFVGGMDFDKQLKALEARHCDILVATPGRLLDFNQRGEVHLDMVEVMVLDEADRMLDMGFIPQVRQIIRQTPPKSERQTLLFSATFTDDVMNLAKQWTTNPAIVEIEPENVASETVEQHVYAVAGSDKYKLLYNLVTQNKWERVMVFANRKDEVRRIEEKLVRDGINAAQLSGDVPQHKRIRTLESFREGRITVLVATDVAGRGIHIDGISHVINFTLPEDPDDYVHRIGRTGRAGTSGVSISFAGEDDSYQLPAIEALLGRKIKCEMPPDELLKPVPRKHH.

A Q motif motif is present at residues 9–37 (TRFHDFKLSNELMHAIHDLGFPYCTPIQA). The 181-residue stretch at 40–220 (LGYTLRGQDA…KQWTTNPAIV (181 aa)) folds into the Helicase ATP-binding domain. 53–60 (AQTGTGKT) is an ATP binding site. Residues 166–169 (DEAD) carry the DEAD box motif. The region spanning 243 to 393 (DKYKLLYNLV…MPPDELLKPV (151 aa)) is the Helicase C-terminal domain.

Belongs to the DEAD box helicase family. RhlB subfamily. In terms of assembly, component of the RNA degradosome, which is a multiprotein complex involved in RNA processing and mRNA degradation.

The protein localises to the cytoplasm. It catalyses the reaction ATP + H2O = ADP + phosphate + H(+). In terms of biological role, DEAD-box RNA helicase involved in RNA degradation. Has RNA-dependent ATPase activity and unwinds double-stranded RNA. The protein is ATP-dependent RNA helicase RhlB of Pseudomonas putida (strain ATCC 47054 / DSM 6125 / CFBP 8728 / NCIMB 11950 / KT2440).